A 542-amino-acid polypeptide reads, in one-letter code: CTP synthase (542 aa).

Residues 1–265 (MARYVFITGG…DSEVLSAFGI (265 aa)) are amidoligase domain. S13 contacts CTP. S13 is a binding site for UTP. 14 to 19 (SLGKGI) contributes to the ATP binding site. L-glutamine is bound at residue Y54. An ATP-binding site is contributed by D71. Mg(2+) contacts are provided by D71 and E139. Residues 146–148 (DIE), 186–191 (KTKPTQ), and K222 contribute to the CTP site. Residues 186–191 (KTKPTQ) and K222 contribute to the UTP site. The Glutamine amidotransferase type-1 domain maps to 291 to 541 (TIAVVGKYTG…IEAAIEQSRL (251 aa)). G353 contributes to the L-glutamine binding site. The active-site Nucleophile; for glutamine hydrolysis is C380. Residues 381-384 (FGMQ), E404, and R469 each bind L-glutamine. Residues H514 and E516 contribute to the active site.

The protein belongs to the CTP synthase family. As to quaternary structure, homotetramer.

It catalyses the reaction UTP + L-glutamine + ATP + H2O = CTP + L-glutamate + ADP + phosphate + 2 H(+). The enzyme catalyses L-glutamine + H2O = L-glutamate + NH4(+). It carries out the reaction UTP + NH4(+) + ATP = CTP + ADP + phosphate + 2 H(+). It participates in pyrimidine metabolism; CTP biosynthesis via de novo pathway; CTP from UDP: step 2/2. With respect to regulation, allosterically activated by GTP, when glutamine is the substrate; GTP has no effect on the reaction when ammonia is the substrate. The allosteric effector GTP functions by stabilizing the protein conformation that binds the tetrahedral intermediate(s) formed during glutamine hydrolysis. Inhibited by the product CTP, via allosteric rather than competitive inhibition. Catalyzes the ATP-dependent amination of UTP to CTP with either L-glutamine or ammonia as the source of nitrogen. Regulates intracellular CTP levels through interactions with the four ribonucleotide triphosphates. The sequence is that of CTP synthase from Brucella melitensis biotype 2 (strain ATCC 23457).